We begin with the raw amino-acid sequence, 217 residues long: Cytidylate kinase (217 aa).

9 to 17 (GPAASGKSS) lines the ATP pocket.

This sequence belongs to the cytidylate kinase family. Type 1 subfamily.

It localises to the cytoplasm. The catalysed reaction is CMP + ATP = CDP + ADP. It carries out the reaction dCMP + ATP = dCDP + ADP. The sequence is that of Cytidylate kinase from Bdellovibrio bacteriovorus (strain ATCC 15356 / DSM 50701 / NCIMB 9529 / HD100).